The primary structure comprises 150 residues: Small ribosomal subunit protein eS19 (150 aa).

This sequence belongs to the eukaryotic ribosomal protein eS19 family. Part of the 30S ribosomal subunit.

Its function is as follows. May be involved in maturation of the 30S ribosomal subunit. The polypeptide is Small ribosomal subunit protein eS19 (Pyrococcus horikoshii (strain ATCC 700860 / DSM 12428 / JCM 9974 / NBRC 100139 / OT-3)).